A 265-amino-acid polypeptide reads, in one-letter code: Small ribosomal subunit protein eS4 (265 aa).

One can recognise an S4 RNA-binding domain in the interval 42–104 (LPLILIIRNR…TGENYRLLYD (63 aa)).

Belongs to the eukaryotic ribosomal protein eS4 family.

Its subcellular location is the cytoplasm. In Oryza sativa subsp. japonica (Rice), this protein is Small ribosomal subunit protein eS4 (RPS4).